The primary structure comprises 440 residues: COP9 signalosome complex subunit 4 (440 aa).

The 171-residue stretch at 216–386 folds into the PCI domain; that stretch reads SNRQFLAASQ…RIIYFESGLE (171 aa).

Belongs to the CSN4 family. As to quaternary structure, component of the COP9 signalosome (CSN) complex.

The protein localises to the cytoplasm. It localises to the nucleus. Functionally, component of the COP9 signalosome (CSN) complex that acts as an regulator of the ubiquitin (Ubl) conjugation pathway by mediating the deneddylation of the cullin subunit of SCF-type E3 ubiquitin-protein ligase complexes. The CSN complex is involved in the regulation of the circadian clock through its control of the stability of the SCF(FWD1) complex. This Neurospora crassa (strain ATCC 24698 / 74-OR23-1A / CBS 708.71 / DSM 1257 / FGSC 987) protein is COP9 signalosome complex subunit 4 (csn-4).